Here is a 405-residue protein sequence, read N- to C-terminus: Acetate kinase (405 aa).

Residue Asn7 coordinates Mg(2+). Lys14 is an ATP binding site. Residue Arg98 coordinates substrate. The active-site Proton donor/acceptor is Asp155. Residues 214 to 218 (HLGNG), 289 to 291 (DLR), and 337 to 341 (GVGEN) contribute to the ATP site. Residue Glu390 coordinates Mg(2+).

Belongs to the acetokinase family. In terms of assembly, homodimer. It depends on Mg(2+) as a cofactor. Mn(2+) serves as cofactor.

The protein localises to the cytoplasm. It catalyses the reaction acetate + ATP = acetyl phosphate + ADP. The protein operates within metabolic intermediate biosynthesis; acetyl-CoA biosynthesis; acetyl-CoA from acetate: step 1/2. Functionally, catalyzes the formation of acetyl phosphate from acetate and ATP. Can also catalyze the reverse reaction. This chain is Acetate kinase, found in Gloeothece citriformis (strain PCC 7424) (Cyanothece sp. (strain PCC 7424)).